A 306-amino-acid chain; its full sequence is Ribonuclease Z (306 aa).

Zn(2+) is bound by residues histidine 63, histidine 65, aspartate 67, histidine 68, histidine 141, aspartate 211, and histidine 269. Aspartate 67 (proton acceptor) is an active-site residue.

This sequence belongs to the RNase Z family. Homodimer. The cofactor is Zn(2+).

The enzyme catalyses Endonucleolytic cleavage of RNA, removing extra 3' nucleotides from tRNA precursor, generating 3' termini of tRNAs. A 3'-hydroxy group is left at the tRNA terminus and a 5'-phosphoryl group is left at the trailer molecule.. Functionally, zinc phosphodiesterase, which displays some tRNA 3'-processing endonuclease activity. Probably involved in tRNA maturation, by removing a 3'-trailer from precursor tRNA. This is Ribonuclease Z from Staphylococcus aureus (strain bovine RF122 / ET3-1).